The sequence spans 487 residues: UDP-glycosyltransferase 85A7 (487 aa).

UDP-alpha-D-glucose contacts are provided by residues 364–366 (CPQ), 381–389 (HCGWNSTLE), and 403–406 (FSEQ).

The protein belongs to the UDP-glycosyltransferase family. In terms of tissue distribution, expressed in roots, shoots, leaves and flowers.

The protein is UDP-glycosyltransferase 85A7 (UGT85A7) of Arabidopsis thaliana (Mouse-ear cress).